Here is a 426-residue protein sequence, read N- to C-terminus: Histidine--tRNA ligase (426 aa).

It belongs to the class-II aminoacyl-tRNA synthetase family.

The protein resides in the cytoplasm. It carries out the reaction tRNA(His) + L-histidine + ATP = L-histidyl-tRNA(His) + AMP + diphosphate + H(+). This is Histidine--tRNA ligase (hisS) from Thermoplasma volcanium (strain ATCC 51530 / DSM 4299 / JCM 9571 / NBRC 15438 / GSS1).